The following is an 850-amino-acid chain: cAMP-inducible prespore protein D7 (850 aa).

Residues 1 to 24 form the signal peptide; it reads MYSKKYTSFVIVLILSCIISTCTS. Low complexity predominate over residues 119–130; that stretch reads QNNNIGSSIGDS. Disordered regions lie at residues 119 to 167 and 787 to 850; these read QNNN…SKTT and DAEL…QNQK. Residues 131-143 show a composition bias toward polar residues; the sequence is TGASTSPQFQSIN. Residues 144–154 show a composition bias toward low complexity; sequence GLSGASQSSGS. Residues 787-798 show a composition bias toward basic and acidic residues; sequence DAELAKNNKQEN. Positions 801 to 820 are enriched in polar residues; that stretch reads ENLVQEKQQSPDQIKNQLKN. A compositionally biased stretch (low complexity) spans 837–850; the sequence is EKNQQLLEQEQNQK.

This chain is cAMP-inducible prespore protein D7 (D7), found in Dictyostelium discoideum (Social amoeba).